The following is a 318-amino-acid chain: Gamma-glutamyl hydrolase (318 aa).

The N-terminal stretch at 1 to 24 (MARLGRLLSVLGLVLCGATGLGLS) is a signal peptide. One can recognise a Gamma-glutamyl hydrolase domain in the interval 25 to 318 (APPAPTPKKP…SSFQQSYIFD (294 aa)). Asn-116 carries an N-linked (GlcNAc...) asparagine glycan. Cys-134 functions as the Nucleophile in the catalytic mechanism. N-linked (GlcNAc...) asparagine glycans are attached at residues Asn-163 and Asn-203. His-244 acts as the Proton donor in catalysis. Asn-307 carries N-linked (GlcNAc...) asparagine glycosylation.

It belongs to the peptidase C26 family. As to quaternary structure, homodimer.

It is found in the secreted. The protein localises to the extracellular space. It localises to the lysosome. Its subcellular location is the melanosome. It catalyses the reaction (6S)-5,6,7,8-tetrahydrofolyl-(gamma-L-Glu)(n) + (n-1) H2O = (6S)-5,6,7,8-tetrahydrofolate + (n-1) L-glutamate. Hydrolyzes the polyglutamate sidechains of pteroylpolyglutamates. Progressively removes gamma-glutamyl residues from pteroylpoly-gamma-glutamate to yield pteroyl-alpha-glutamate (folic acid) and free glutamate. May play an important role in the bioavailability of dietary pteroylpolyglutamates and in the metabolism of pteroylpolyglutamates and antifolates. Exhibits either endo- or exopeptidase activity depending upon the tissue of origin. When secreted, it acts primarily as an endopeptidase. The chain is Gamma-glutamyl hydrolase (GGH) from Bos taurus (Bovine).